A 255-amino-acid chain; its full sequence is Geranylgeranylglyceryl phosphate synthase (255 aa).

Mg(2+)-binding residues include aspartate 34 and threonine 64. Sn-glycerol 1-phosphate contacts are provided by residues 182–188 (YLEAGSG), 213–214 (GG), and 235–236 (GN).

This sequence belongs to the GGGP/HepGP synthase family. Group II subfamily. It depends on Mg(2+) as a cofactor.

Its subcellular location is the cytoplasm. It carries out the reaction sn-glycerol 1-phosphate + (2E,6E,10E)-geranylgeranyl diphosphate = sn-3-O-(geranylgeranyl)glycerol 1-phosphate + diphosphate. The protein operates within membrane lipid metabolism; glycerophospholipid metabolism. In terms of biological role, prenyltransferase that catalyzes the transfer of the geranylgeranyl moiety of geranylgeranyl diphosphate (GGPP) to the C3 hydroxyl of sn-glycerol-1-phosphate (G1P). This reaction is the first ether-bond-formation step in the biosynthesis of archaeal membrane lipids. The polypeptide is Geranylgeranylglyceryl phosphate synthase (Saccharolobus islandicus (strain M.14.25 / Kamchatka #1) (Sulfolobus islandicus)).